Reading from the N-terminus, the 198-residue chain is Ribosomal RNA small subunit methyltransferase G (198 aa).

Residues G74, F79, 123–124 (IQ), and R136 each bind S-adenosyl-L-methionine.

Belongs to the methyltransferase superfamily. RNA methyltransferase RsmG family.

The protein resides in the cytoplasm. The enzyme catalyses guanosine(527) in 16S rRNA + S-adenosyl-L-methionine = N(7)-methylguanosine(527) in 16S rRNA + S-adenosyl-L-homocysteine. Functionally, specifically methylates the N7 position of guanine in position 527 of 16S rRNA. The chain is Ribosomal RNA small subunit methyltransferase G from Orientia tsutsugamushi (strain Ikeda) (Rickettsia tsutsugamushi).